The following is a 389-amino-acid chain: Nicotinate phosphoribosyltransferase (389 aa).

Residue H216 is modified to Phosphohistidine; by autocatalysis.

The protein belongs to the NAPRTase family. In terms of processing, transiently phosphorylated on a His residue during the reaction cycle. Phosphorylation strongly increases the affinity for substrates and increases the rate of nicotinate D-ribonucleotide production. Dephosphorylation regenerates the low-affinity form of the enzyme, leading to product release.

It catalyses the reaction nicotinate + 5-phospho-alpha-D-ribose 1-diphosphate + ATP + H2O = nicotinate beta-D-ribonucleotide + ADP + phosphate + diphosphate. The protein operates within cofactor biosynthesis; NAD(+) biosynthesis; nicotinate D-ribonucleotide from nicotinate: step 1/1. Its function is as follows. Catalyzes the synthesis of beta-nicotinate D-ribonucleotide from nicotinate and 5-phospho-D-ribose 1-phosphate at the expense of ATP. The chain is Nicotinate phosphoribosyltransferase from Ralstonia nicotianae (strain ATCC BAA-1114 / GMI1000) (Ralstonia solanacearum).